We begin with the raw amino-acid sequence, 33 residues long: Large ribosomal subunit protein eL21 (33 aa).

Belongs to the eukaryotic ribosomal protein eL21 family. As to quaternary structure, component of the large ribosomal subunit.

The protein resides in the cytoplasm. It localises to the cytosol. Its subcellular location is the endoplasmic reticulum. Its function is as follows. Component of the large ribosomal subunit. The ribosome is a large ribonucleoprotein complex responsible for the synthesis of proteins in the cell. This Xenopus laevis (African clawed frog) protein is Large ribosomal subunit protein eL21 (rpl21).